The primary structure comprises 497 residues: Probable malate:quinone oxidoreductase (497 aa).

It belongs to the MQO family. The cofactor is FAD.

The enzyme catalyses (S)-malate + a quinone = a quinol + oxaloacetate. It functions in the pathway carbohydrate metabolism; tricarboxylic acid cycle; oxaloacetate from (S)-malate (quinone route): step 1/1. The polypeptide is Probable malate:quinone oxidoreductase (Tolumonas auensis (strain DSM 9187 / NBRC 110442 / TA 4)).